The sequence spans 324 residues: Probable nicotianamine synthase 4 (324 aa).

Belongs to the nicotianamine synthase (NAS)-like family.

It carries out the reaction 3 S-adenosyl-L-methionine = nicotianamine + 3 S-methyl-5'-thioadenosine + 3 H(+). Its function is as follows. Synthesizes nicotianamine, a polyamine which serves as a sensor for the physiological iron status within the plant, and/or might be involved in the transport of iron. The sequence is that of Probable nicotianamine synthase 4 (NAS4) from Arabidopsis thaliana (Mouse-ear cress).